The chain runs to 588 residues: Dual specificity tyrosine-phosphorylation-regulated kinase 3 (588 aa).

The segment at 1 to 188 (MGGTARGPGR…HGVIGGPNNG (188 aa)) is disordered. Polar residues predominate over residues 97 to 134 (SNTIQSDGISDSEKCSPTVSQGKSSDCLNTVKSNSSSK). The Protein kinase domain maps to 209–522 (YEVLKIIGKG…PAQALRHPWI (314 aa)). Residues 215 to 223 (IGKGSFGQV), Lys238, and 288 to 291 (FELL) each bind ATP. Asp335 (proton acceptor) is an active-site residue. The residue at position 350 (Ser350) is a Phosphoserine. Residue Tyr369 is modified to Phosphotyrosine. The Nuclear localization signal signature appears at 468–481 (RSRRGKKRGPPGSK).

This sequence belongs to the protein kinase superfamily. CMGC Ser/Thr protein kinase family. MNB/DYRK subfamily. Interacts with SIRT1. The cofactor is Mg(2+). In terms of processing, ubiquitinated at anaphase by the anaphase-promoting complex (APC/C), leading to its degradation by the proteasome. Post-translationally, protein kinase activity is activated following autophosphorylation at Tyr-369. Autophosphorylation at Ser-350 stabilizes the protein and enhances the protein kinase activity. In terms of tissue distribution, isoform 1: Highly expressed in testis and in hematopoietic tissue such as fetal liver, and bone marrow. Isoform 1: Predominant form in fetal liver and bone marrow. Isoform 1: Present at low levels in heart, pancreas, lymph node and thymus. Isoform 2: Highly expressed in testis and in hematopoietic tissue such as fetal liver, and bone marrow. Isoform 2: Predominant form in testis. Isoform 2: Present at low levels in heart, pancreas, lymph node and thymus.

The protein localises to the nucleus. It localises to the cytoplasm. The protein resides in the nucleus speckle. It is found in the cytoplasmic granule. Its subcellular location is the cytoskeleton. The protein localises to the microtubule organizing center. It localises to the centrosome. The catalysed reaction is L-seryl-[protein] + ATP = O-phospho-L-seryl-[protein] + ADP + H(+). It carries out the reaction L-threonyl-[protein] + ATP = O-phospho-L-threonyl-[protein] + ADP + H(+). The enzyme catalyses L-tyrosyl-[protein] + ATP = O-phospho-L-tyrosyl-[protein] + ADP + H(+). Protein kinase activity is activated following autophosphorylation at Tyr-369. Inhibited by harmine, an ATP competitive inhibitor. Inhibited by small-compound GSK-626616. In terms of biological role, dual-specificity protein kinase that promotes disassembly of several types of membraneless organelles during mitosis, such as stress granules, nuclear speckles and pericentriolar material. Dual-specificity tyrosine-regulated kinases (DYRKs) autophosphorylate a critical tyrosine residue in their activation loop and phosphorylate their substrate on serine and threonine residues. Acts as a central dissolvase of membraneless organelles during the G2-to-M transition, after the nuclear-envelope breakdown: acts by mediating phosphorylation of multiple serine and threonine residues in unstructured domains of proteins, such as SRRM1 and PCM1. Does not mediate disassembly of all membraneless organelles: disassembly of P-body and nucleolus is not regulated by DYRK3. Dissolution of membraneless organelles at the onset of mitosis is also required to release mitotic regulators, such as ZNF207, from liquid-unmixed organelles where they are sequestered and keep them dissolved during mitosis. Regulates mTORC1 by mediating the dissolution of stress granules: during stressful conditions, DYRK3 partitions from the cytosol to the stress granule, together with mTORC1 components, which prevents mTORC1 signaling. When stress signals are gone, the kinase activity of DYRK3 is required for the dissolution of stress granule and mTORC1 relocation to the cytosol: acts by mediating the phosphorylation of the mTORC1 inhibitor AKT1S1, allowing full reactivation of mTORC1 signaling. Also acts as a negative regulator of EPO-dependent erythropoiesis: may place an upper limit on red cell production during stress erythropoiesis. Inhibits cell death due to cytokine withdrawal in hematopoietic progenitor cells. Promotes cell survival upon genotoxic stress through phosphorylation of SIRT1: this in turn inhibits p53/TP53 activity and apoptosis. This Homo sapiens (Human) protein is Dual specificity tyrosine-phosphorylation-regulated kinase 3.